Consider the following 796-residue polypeptide: MSFFGLENSGNARDGPLDFEESYKGYGEHELEENDYLNDETFGDNVQVGTDFDFGNPHSSGSSGNAIGGNGVGATARSYVAATAEGISGPRTDGTAAAGPLDLKPMESLWSTAPPPAMAPSPQSTMAPAPAPQQMAPLQPILSMQDLERQQRQMQQQFMNFHAMGHPQGLPQGPPQQQFPMQPASGQPGPSQFAPPPPPPGVNVNMNQMPMGPVQVPVQASPSPIGMSNTPSPGPVVGATKMPLQSGRRSKRDLSPEEQRRLQIRHAKVEKILKYSGLMTPRDKDFITRYQLSQIVTEDPYNEDFYFQVYKIIQRGGITSESNKGLIARAYLEHSGHRLGGRYKRTDIALQRMQSQVEKAVTVAKERPSKLKDQQAAAGNSSQDNKQANTVLGKISSTLNSKNPRRQLQIPRQQPSDPDALKDVTDSLTNVDLASSGSSSTGSSAAAVASKQRRRSSYAFNNGNGATNLNKSGGKKFILELIETVYEEILDLEANLRNGQQTDSTAMWEALHIDDSSYDVNPFISMLSFDKGIKIMPRIFNFLDKQQKLKILQKIFNELSHLQIIILSSYKTTPKPTLTQLKKVDLFQMIILKIIVSFLSNNSNFIEIMGLLLQLIRNNNVSFLTTSKIGLNLITILISRAALIKQDSSRSNILSSPEISTWNEIYDKLFTSLESKIQLIFPPREYNDHIMRLQNDKFMDEAYIWQFLASLALSGKLNHQRIIIDEVRDEIFATINEAETLQKKEKELSVLPQRSQELDTELKSIIYNKEKLYQDLNLFLNVMGLVYRDGEISELK.

3 disordered regions span residues 1 to 21 (MSFF…DFEE), 164 to 200 (MGHP…PPPP), and 365 to 465 (KERP…NGNG). The residue at position 2 (Ser2) is an N-acetylserine. The segment covering 165–192 (GHPQGLPQGPPQQQFPMQPASGQPGPSQ) has biased composition (low complexity). A compositionally biased stretch (polar residues) spans 377–402 (AAGNSSQDNKQANTVLGKISSTLNSK). Composition is skewed to low complexity over residues 406 to 415 (RQLQIPRQQP) and 434 to 450 (ASSG…AVAS). Phosphoserine is present on residues Ser456 and Ser457.

Belongs to the PAT1 family. In terms of assembly, associates with the 40S ribosomal subunit. Associates with the heptameric LSM1-LSM7 complex. Interacts directly with LSM2 and LSM3 within the LSM1-LSM7 complex. Interacts with DHH1, LSM1, LSM5, RPB4, RPB7 and with topoisomerase TOP2. Interacts with CDC33, PAB1, TIF4631 and TIF4632 in an RNA-dependent manner. Binds mRNAs.

The protein resides in the cytoplasm. It is found in the nucleus. The protein localises to the P-body. Its subcellular location is the chromosome. It localises to the centromere. The protein resides in the kinetochore. It is found in the stress granule. Functionally, activator of decapping that functions as a general and active mechanism of translational repression and required for P-body formation. First decay factor recruited to mRNA, at a time when the mRNA is still associated with translation factors. Subsequently, PAT1 recruits the hepta-heterodimer LSM1-LSM7 complex to P-bodies. In association with the LSM1-LSM7 complex, stabilizes the 3' terminus of mRNAs. This association is also required for mosaic virus genomic RNA translation. Also together with the LSM1-LSM7 complex, the LSM1-LSM7 complex binds to osmotic stress-activated mRNAs to attenuate the osmotic stress response, probably by limiting ribosome access to the mRNA and consequently translation. Modulates the rates of mRNA-decapping that occur following deadenylation. Might be required for promoting the formation or the stabilization of the pre-initiation translation complexes. Required for 40S ribosomal subunit joining to capped and/or polyadenylated mRNA. With other P-body components, enhances the formation of retrotransposition-competent Ty1 virus-like particles. Structural component of the kinetochore and associates with centromeres in a NDC10-dependent manner. Involved in maintaining the structural integrity of centromeric chromatin to facilitate faithful chromosome segregation and proper kinetochore function. In Saccharomyces cerevisiae (strain ATCC 204508 / S288c) (Baker's yeast), this protein is Deadenylation-dependent mRNA-decapping factor PAT1 (PAT1).